A 154-amino-acid polypeptide reads, in one-letter code: Ribonuclease H (154 aa).

Residues 1–142 (MTPKLVIYTD…ADELARLGML (142 aa)) form the RNase H type-1 domain. 4 residues coordinate Mg(2+): aspartate 10, glutamate 48, aspartate 70, and aspartate 134.

Belongs to the RNase H family. As to quaternary structure, monomer. Requires Mg(2+) as cofactor.

It localises to the cytoplasm. It catalyses the reaction Endonucleolytic cleavage to 5'-phosphomonoester.. Its function is as follows. Endonuclease that specifically degrades the RNA of RNA-DNA hybrids. The protein is Ribonuclease H of Caulobacter sp. (strain K31).